An 811-amino-acid polypeptide reads, in one-letter code: Probable potassium transporter 16 (811 aa).

Residues 1 to 66 (MAQQQAGARG…GQESWMRTLR (66 aa)) are Cytoplasmic-facing. Residues 67–87 (LGFQCVGILHADLGTSPLYVY) traverse the membrane as a helical segment. Topologically, residues 88-100 (QNTFKYGIKHEDD) are extracellular. The helical transmembrane segment at 101–121 (IIGVLSLIIYSFVLFTMVKIV) threads the bilayer. Residues 122 to 190 (FIALHANDDG…KSQLEKKPAK (69 aa)) lie on the Cytoplasmic side of the membrane. The helical transmembrane segment at 191–211 (IAVFFLTIFATALAISDCVLN) threads the bilayer. At 212–228 (PSVSVLSAVNGLKLRAP) the chain is on the extracellular side. The helical transmembrane segment at 229 to 249 (HLTTDEVVWITVGILVVFFAV) threads the bilayer. Over 250–256 (QRFGTDK) the chain is Cytoplasmic. The helical transmembrane segment at 257 to 277 (IGYTFAPVVVVWLLLISGIGI) threads the bilayer. Residues 278-310 (YDLVKYDVGVLRAFNPKYIIDYFRRNKKDGWVQ) lie on the Extracellular side of the membrane. A helical membrane pass occupies residues 311–331 (LGEVLLTFTGTEALFADLGYF). The Cytoplasmic segment spans residues 332–337 (SIKSIQ). A helical membrane pass occupies residues 338 to 358 (LSSTFVLLPSVLCTYIGQAAY). Residues 359 to 379 (LRKHMDQQHIQNAFFNSIPRP) are Extracellular-facing. Residues 380–400 (LFWPMFVLAIMTSVIGCQAMV) form a helical membrane-spanning segment. Topologically, residues 401–438 (SCAFATMSHLQTLNCFPRIKILHTSRRYSGQLYSPEVN) are cytoplasmic. A helical membrane pass occupies residues 439–459 (FFLCLLSCVITLSFRTTGFIV). Topologically, residues 460–463 (KAHE) are extracellular. Residues 464 to 484 (ICVVLVMVITTILMTIVMLLV) traverse the membrane as a helical segment. Residues 485-488 (WKVN) lie on the Cytoplasmic side of the membrane. The helical transmembrane segment at 489-509 (IWWIVLFFVVFMSTETVYLSA) threads the bilayer. Over 510-519 (VLYKFTKGPY) the chain is Extracellular. A helical transmembrane segment spans residues 520-540 (MPLAMSAVLMVIMFVWHYVHV). Residues 541-811 (KRYKFELEHT…LLKVGITYEI (271 aa)) lie on the Cytoplasmic side of the membrane.

This sequence belongs to the HAK/KUP transporter (TC 2.A.72.3) family.

It localises to the membrane. In terms of biological role, high-affinity potassium transporter. The sequence is that of Probable potassium transporter 16 (HAK16) from Oryza sativa subsp. japonica (Rice).